A 281-amino-acid chain; its full sequence is Phosphatidylglycerol--prolipoprotein diacylglyceryl transferase (281 aa).

Transmembrane regions (helical) follow at residues 11 to 31 (IIFT…VISF), 57 to 77 (LLYA…IIFY), 89 to 109 (VFYI…AIIV), 121 to 141 (ILEI…AGRI), 194 to 214 (PTQL…IYFF), 222 to 242 (GSIS…IEFF), and 255 to 275 (IITM…IIMY). Arginine 140 contributes to the a 1,2-diacyl-sn-glycero-3-phospho-(1'-sn-glycerol) binding site.

This sequence belongs to the Lgt family.

It localises to the cell inner membrane. The catalysed reaction is L-cysteinyl-[prolipoprotein] + a 1,2-diacyl-sn-glycero-3-phospho-(1'-sn-glycerol) = an S-1,2-diacyl-sn-glyceryl-L-cysteinyl-[prolipoprotein] + sn-glycerol 1-phosphate + H(+). It functions in the pathway protein modification; lipoprotein biosynthesis (diacylglyceryl transfer). Functionally, catalyzes the transfer of the diacylglyceryl group from phosphatidylglycerol to the sulfhydryl group of the N-terminal cysteine of a prolipoprotein, the first step in the formation of mature lipoproteins. In Buchnera aphidicola subsp. Acyrthosiphon pisum (strain Tuc7), this protein is Phosphatidylglycerol--prolipoprotein diacylglyceryl transferase.